A 400-amino-acid chain; its full sequence is Opsin-3 (400 aa).

Residues 1–38 lie on the Extracellular side of the membrane; the sequence is MYSGNRSGDQGYWEDGAGAEGAAPAGTRSPAPLFSPTA. Residue asparagine 5 is glycosylated (N-linked (GlcNAc...) asparagine). A helical transmembrane segment spans residues 39 to 63; that stretch reads YERLALLLGCLALLGVGGNLLVLLL. The Cytoplasmic segment spans residues 64-75; that stretch reads YSKFPRLRTPTH. Residues 76 to 100 traverse the membrane as a helical segment; sequence LFLVNLSLGDLLVSLFGVTFTFASC. At 101 to 115 the chain is on the extracellular side; sequence LRNGWVWDAVGCAWD. The cysteines at positions 112 and 186 are disulfide-linked. The helical transmembrane segment at 116–135 threads the bilayer; that stretch reads GFSGSLFGFVSITTLTVLAY. Residues 136-151 lie on the Cytoplasmic side of the membrane; that stretch reads ERYIRVVHARVINFSW. A helical transmembrane segment spans residues 152-175; the sequence is AWRAITYIWLYSLAWAGAPLLGWN. At 176 to 199 the chain is on the extracellular side; sequence RYILDIHGLGCTVDWRSKDANDSS. The N-linked (GlcNAc...) asparagine glycan is linked to asparagine 196. A helical transmembrane segment spans residues 200 to 227; that stretch reads FVLFLFLGCLVVPVGIIAHCYGHILYSV. Residues 228-253 are Cytoplasmic-facing; sequence RMLRCVEDLQTIQVIKMLRYEKKVAK. The chain crosses the membrane as a helical span at residues 254-277; sequence MCFLMAFVFLTCWMPYIVTRFLVV. Over 278-285 the chain is Extracellular; sequence NGYGHLVT. The helical transmembrane segment at 286-310 threads the bilayer; it reads PTVSIVSYLFAKSSTVYNPVIYIFM. Lysine 297 carries the N6-(retinylidene)lysine modification. Topologically, residues 311-400 are cytoplasmic; the sequence is NRKFRRSLLQ…KVDVIQVRPL (90 aa). A lipid anchor (S-palmitoyl cysteine) is attached at cysteine 323.

This sequence belongs to the G-protein coupled receptor 1 family. Opsin subfamily. Interacts with MC1R; the interaction results in a decrease in MC1R-mediated cAMP signaling and ultimately a decrease in melanin production in melanocytes. Expressed in the eye (at protein level). Expressed in tracheal airway smooth muscle. Expressed in brown adipocyte tissue; expression becomes more abundant during differentiation. Strongly expressed in brain. Highly expressed in the preoptic area and paraventricular nucleus of the hypothalamus. Shows highly patterned expression in other regions of the brain, being enriched in selected regions of the cerebral cortex, cerebellar Purkinje cells, a subset of striatal neurons, selected thalamic nuclei, and a subset of interneurons in the ventral horn of the spinal cord.

The protein resides in the cell membrane. The protein localises to the cytoplasm. Functionally, G-protein coupled receptor which selectively activates G proteins via ultraviolet A (UVA) light-mediated activation in the skin. Binds both 11-cis retinal and all-trans retinal. Regulates melanogenesis in melanocytes via inhibition of alpha-MSH-induced MC1R-mediated cAMP signaling, modulation of calcium flux, regulation of CAMK2 phosphorylation, and subsequently phosphorylation of CREB, p38, ERK and MITF in response to blue light. Plays a role in melanocyte survival through regulation of intracellular calcium levels and subsequent BCL2/RAF1 signaling. Additionally regulates apoptosis via cytochrome c release and subsequent activation of the caspase cascade. Required for TYR and DCT blue light-induced complex formation in melanocytes. Involved in keratinocyte differentiation in response to blue-light. Required for the UVA-mediated induction of calcium and mitogen-activated protein kinase signaling resulting in the expression of MMP1, MMP2, MMP3, MMP9 and TIMP1 in dermal fibroblasts. Plays a role in light-mediated glucose uptake, mitochondrial respiration and fatty acid metabolism in brown adipocyte tissues. May be involved in photorelaxation of airway smooth muscle cells, via blue-light dependent GPCR signaling pathways. The polypeptide is Opsin-3 (Opn3) (Mus musculus (Mouse)).